Consider the following 123-residue polypeptide: Large ribosomal subunit protein uL14 (123 aa).

It belongs to the universal ribosomal protein uL14 family. As to quaternary structure, part of the 50S ribosomal subunit. Forms a cluster with proteins L3 and L19. In the 70S ribosome, L14 and L19 interact and together make contacts with the 16S rRNA in bridges B5 and B8.

In terms of biological role, binds to 23S rRNA. Forms part of two intersubunit bridges in the 70S ribosome. The sequence is that of Large ribosomal subunit protein uL14 from Yersinia pestis bv. Antiqua (strain Antiqua).